Reading from the N-terminus, the 287-residue chain is MHQISGINAASPEKNNSKLADVSLQQFLANVDEIRHVLTTLSADRHAIYMEQVESLAAGCSDTAKCRKLNDHVDKFIAQARGIRRRLADASEELVQYPESRVGSGRARHEQIQMLIVSLEGIMSQFADDQASYKAEAAKKIAAYLRKQNIEVTDSEIDGAIENGSLFQLTRNINLGVAQKKALFDDMKNRATDIMILEKQIREVEELFVDMQLLVQSQGETVDRIETSVIRAEEYAEQAQQNVRQAVVLRRKNRKWKIVTCIALIVLLLVVVYLLSHFLGAIIPGWK.

Residues 1–262 are Cytoplasmic-facing; the sequence is MHQISGINAA…NRKWKIVTCI (262 aa). The stretch at 65-97 forms a coiled coil; the sequence is KCRKLNDHVDKFIAQARGIRRRLADASEELVQY. In terms of domain architecture, t-SNARE coiled-coil homology spans 184–246; that stretch reads FDDMKNRATD…EQAQQNVRQA (63 aa). Residues 263–283 traverse the membrane as a helical; Anchor for type IV membrane protein segment; that stretch reads ALIVLLLVVVYLLSHFLGAII. Residues 284–287 lie on the Extracellular side of the membrane; it reads PGWK.

The protein belongs to the syntaxin family.

Its subcellular location is the membrane. Its function is as follows. Potentially involved in docking of synaptic vesicles at presynaptic active zones. This is Putative syntaxin-4 (syx-4) from Caenorhabditis elegans.